Here is a 141-residue protein sequence, read N- to C-terminus: Hemoglobin subunit alpha (141 aa).

Positions 1–141 (VLSAADKTHV…VSTVLVSKYR (141 aa)) constitute a Globin domain. Position 3 is a phosphoserine (Ser-3). An N6-succinyllysine modification is found at Lys-7. Thr-8 is modified (phosphothreonine). Position 11 is an N6-succinyllysine (Lys-11). Lys-16 bears the N6-acetyllysine; alternate mark. N6-succinyllysine; alternate is present on Lys-16. At Ser-35 the chain carries Phosphoserine. Lys-40 carries the post-translational modification N6-succinyllysine. Ser-49 is subject to Phosphoserine. Residue His-58 coordinates O2. Residue His-87 coordinates heme b. Residue Ser-102 is modified to Phosphoserine. The residue at position 108 (Thr-108) is a Phosphothreonine. A Phosphoserine modification is found at Ser-124. A Phosphothreonine modification is found at Thr-134. Ser-138 bears the Phosphoserine mark.

The protein belongs to the globin family. Heterotetramer of two alpha chains and two beta chains. Red blood cells.

In terms of biological role, involved in oxygen transport from the lung to the various peripheral tissues. Hemopressin acts as an antagonist peptide of the cannabinoid receptor CNR1. Hemopressin-binding efficiently blocks cannabinoid receptor CNR1 and subsequent signaling. This Dasypus novemcinctus (Nine-banded armadillo) protein is Hemoglobin subunit alpha (HBA).